The chain runs to 756 residues: U3 small nucleolar RNA-associated protein 14 homolog B (756 aa).

Residues 21-44 (DLPENYPLSTSEDEGDSDGEGKRQ) are disordered. Phosphoserine is present on residues Ser-29, Ser-31, and Ser-37. Coiled coils occupy residues 215–244 (SLEE…RREK) and 316–345 (PEAR…SEEE). Composition is skewed to basic and acidic residues over residues 419–428 (KERSFQERVD) and 452–468 (LNKE…SSEE). 2 disordered regions span residues 419–468 (KERS…SSEE) and 497–539 (QQGE…KKKK). The stretch at 449–476 (LQKLNKESHQSDNQKVSSEENVLHIQRE) forms a coiled coil. Phosphoserine is present on Ser-554.

Belongs to the UTP14 family. In terms of tissue distribution, expressed predominantly in germ cells of the testis; weakly expressed in brain.

The protein resides in the nucleus. It is found in the nucleolus. In terms of biological role, essential for spermatogenesis. May be required specifically for ribosome biogenesis and hence protein synthesis during male meiosis. This Mus musculus (Mouse) protein is U3 small nucleolar RNA-associated protein 14 homolog B (Utp14b).